The sequence spans 624 residues: Interleukin-1 receptor-associated kinase-like 2 (624 aa).

Positions 13 to 94 (LDDLCRNIDT…RAAQIVLSWK (82 aa)) constitute a Death domain. The 266-residue stretch at 210–475 (FDQSHRISEG…LPEACAETWA (266 aa)) folds into the Protein kinase domain. Residues 216-224 (ISEGTFADI), Lys237, and 337-340 (KSAN) each bind ATP. Disordered stretches follow at residues 508–536 (SLPW…NSSL) and 549–593 (RVSS…ETSW). The segment covering 558-577 (GNGTAQPSTSGRQEADSSSE) has biased composition (polar residues).

Belongs to the protein kinase superfamily. TKL Ser/Thr protein kinase family. Pelle subfamily. As to quaternary structure, interacts with MYD88. IL-1 stimulation leads to the formation of a signaling complex which dissociates from the IL-1 receptor following the binding of PELI1.

Its function is as follows. Binds to the IL-1 type I receptor following IL-1 engagement, triggering intracellular signaling cascades leading to transcriptional up-regulation and mRNA stabilization. In Rattus norvegicus (Rat), this protein is Interleukin-1 receptor-associated kinase-like 2 (Irak2).